A 932-amino-acid polypeptide reads, in one-letter code: MTEFLPFVARHIGPRHEDERAMLAALGLPSMETLITQAVPASIRLNRALNLPAALSEADALAELGTIMGRNVVKKSFIGAGYHGVHTPPVIQRNLFENPAWYTAYTPYQSEISQGRLELLFHFQTLVAELTGLPVACASLLDEATAVAEAIGVACRHHRDKRSRILLAGELHPQTVDVVNTRAEPLGWEIATGSDVDDNTAAIVVPWPDTRGVYGDFAKVIADAKAKGALVIAVADPLALTIMEAPARWGADMAVGSMQRYGVPMGFGGPHAAYLAVSEALTRIIPGRIVGQSVDAHGRAAYRLALQTREQHIRRDKATSNICTAQALLANMAAAFAIWHGPAGLQAIATRVAALAARFAAALKAAGVEIAGESLFDTVTAKVPGKAAAIAAEADKGGRLIRIIDADTVGVTFDETSTEEDLTALASLFGAKPVGGDTVLVPGKERGEGFLTQEVFHSHRSETEMMRFLRRLADKDLALDRAMIPLGSCTMKLNAAAEMMPVSWNTVANLHPFAPAEQVQGYAKMTSDLEAWLCEITGFAGVSLQPNAGSQGEYAGLMAIRHYHQAWGQGHRNICLIPSSAHGTNPASASMAGMSVVVVNCRPDGDIDIDDLKAKAEKHRDNLAAFMITYPSTYGVFEEGIKAFCEIVHDNGGQVYFDGANLNALVGLARPADIGADVCHMNLHKTFCIPHGGGGPGVGPIGVAKHLVPYLPGHVEAGSEHAVAAAQFGSASILVITWMYIRMMGGAGLKKATEAAILNANYIAHRLKGVYPILYTGAHDRVAHECIVDTRVLKDSAGITVEDVAKRLIDYGFHAPSMSWPVAGTLMIEPTESEPKLEIDRLCDAMIAIAGEAKKVADGVWPADDNPLANAPHTASDTLATEWKHPYTREEAVFPGGAFDPTAKYWPPVSRVDNVGGDRNLICSCPPVAAYG.

Lys685 bears the N6-(pyridoxal phosphate)lysine mark.

This sequence belongs to the GcvP family. As to quaternary structure, the glycine cleavage system is composed of four proteins: P, T, L and H. The cofactor is pyridoxal 5'-phosphate.

The enzyme catalyses N(6)-[(R)-lipoyl]-L-lysyl-[glycine-cleavage complex H protein] + glycine + H(+) = N(6)-[(R)-S(8)-aminomethyldihydrolipoyl]-L-lysyl-[glycine-cleavage complex H protein] + CO2. Its function is as follows. The glycine cleavage system catalyzes the degradation of glycine. The P protein binds the alpha-amino group of glycine through its pyridoxal phosphate cofactor; CO(2) is released and the remaining methylamine moiety is then transferred to the lipoamide cofactor of the H protein. This chain is Glycine dehydrogenase (decarboxylating), found in Brucella canis (strain ATCC 23365 / NCTC 10854 / RM-666).